A 624-amino-acid chain; its full sequence is Glutaminase 2 (624 aa).

The segment at 1–20 (MDTQPIRLPSVAGATRSAGY) is disordered. The segment at 43 to 325 (GELADYIPEL…LSARFDLHML (283 aa)) is glutaminase. Substrate contacts are provided by Ser85, Asn134, Glu178, Asn185, Tyr209, Tyr261, and Val279. The STAS domain occupies 355–466 (QQILDERHSD…ALLDDAIEWA (112 aa)). Residue 491-608 (LLAELDTDEI…IMRNLAAILA (118 aa)) coordinates a nucleoside 3',5'-cyclic phosphate.

It belongs to the glutaminase family. As to quaternary structure, homotetramer.

The catalysed reaction is L-glutamine + H2O = L-glutamate + NH4(+). This is Glutaminase 2 (glsA2) from Bradyrhizobium diazoefficiens (strain JCM 10833 / BCRC 13528 / IAM 13628 / NBRC 14792 / USDA 110).